The sequence spans 359 residues: DNA replication and repair protein RecF (359 aa).

30 to 37 (GPNGSGKT) contributes to the ATP binding site.

This sequence belongs to the RecF family.

The protein localises to the cytoplasm. Its function is as follows. The RecF protein is involved in DNA metabolism; it is required for DNA replication and normal SOS inducibility. RecF binds preferentially to single-stranded, linear DNA. It also seems to bind ATP. The chain is DNA replication and repair protein RecF from Vibrio vulnificus (strain CMCP6).